A 303-amino-acid chain; its full sequence is Probable cell division protein WhiA (303 aa).

The H-T-H motif DNA-binding region spans 272–303; the sequence is SIQQVADALEFPITKSGVNHRLRKINKIADDL.

It belongs to the WhiA family.

In terms of biological role, involved in cell division and chromosome segregation. This Streptococcus pyogenes serotype M6 (strain ATCC BAA-946 / MGAS10394) protein is Probable cell division protein WhiA.